The sequence spans 2242 residues: Large tegument protein deneddylase (2242 aa).

Residues 1 to 238 (MKVTQASCHQ…IDLTGVVRES (238 aa)) are deubiquitination activity. In terms of domain architecture, Peptidase C76 spans 4–226 (TQASCHQGDI…AARLVSTYRD (223 aa)). Active-site residues include C24, D160, and H162. Residues 239–318 (ADTAATTTTA…KTLATASSSS (80 aa)) are disordered. The span at 240 to 250 (DTAATTTTAAP) shows a compositional bias: low complexity. The span at 251–268 (SLPPLPDPIVDPGCPPGV) shows a compositional bias: pro residues. Residues 304–318 (PSTTSKTLATASSSS) are compositionally biased toward low complexity. The interval 328 to 332 (SSAVP) is interaction with inner tegument protein. Positions 1173–1190 (SQQKMEGQLQETRQQMTE) are enriched in polar residues. The tract at residues 1173–1229 (SQQKMEGQLQETRQQMTETSERLDRSLRQDPGSSSVTRVPEKPFKGQELAGRITPPP) is disordered. A compositionally biased stretch (basic and acidic residues) spans 1191-1200 (TSERLDRSLR).

It belongs to the herpesviridae large tegument protein family. In terms of assembly, interacts with host CUL1 and CUL4A; these interactions inhibit the E3 ligase activity of cullins. Interacts with inner tegument protein. Interacts with capsid vertex specific component CVC2. Interacts with the major capsid protein/MCP.

Its subcellular location is the virion tegument. It localises to the host cytoplasm. It is found in the host nucleus. The catalysed reaction is Thiol-dependent hydrolysis of ester, thioester, amide, peptide and isopeptide bonds formed by the C-terminal Gly of ubiquitin (a 76-residue protein attached to proteins as an intracellular targeting signal).. Large tegument protein that plays multiple roles in the viral cycle. During viral entry, remains associated with the capsid while most of the tegument is detached and participates in the capsid transport toward the host nucleus. Plays a role in the routing of the capsid at the nuclear pore complex and subsequent uncoating. Within the host nucleus, acts as a deneddylase and promotes the degradation of nuclear CRLs (cullin-RING ubiquitin ligases) and thereby stabilizes nuclear CRL substrates, while cytoplasmic CRLs remain unaffected. These modifications prevent host cell cycle S-phase progression and create a favorable environment allowing efficient viral genome replication. Participates later in the secondary envelopment of capsids. Indeed, plays a linker role for the association of the outer viral tegument to the capsids together with the inner tegument protein. The sequence is that of Large tegument protein deneddylase from Homo sapiens (Human).